A 450-amino-acid chain; its full sequence is BAG family molecular chaperone regulator 5 (450 aa).

5 BAG domains span residues 9–86 (SIKR…EQNA), 95–167 (EAIF…ESCA), 182–260 (SVSK…DLDE), 275–350 (SILK…DLKE), and 365–442 (EHQS…YYLD).

Binds to the ATPase domain of HSP/HSC70 chaperones.

Co-chaperone for HSP/HSP70 proteins. It functions as a nucleotide-exchange factor promoting the release of ADP from HSP70, thereby activating HSP70-mediated protein refolding. This chain is BAG family molecular chaperone regulator 5 (BAG5), found in Gallus gallus (Chicken).